We begin with the raw amino-acid sequence, 575 residues long: Urease subunit alpha (575 aa).

The 439-residue stretch at 137-575 (GGIDSHIHWI…LPMAQRYFLF (439 aa)) folds into the Urease domain. The Ni(2+) site is built by H142, H144, and K225. At K225 the chain carries N6-carboxylysine. H227 lines the substrate pocket. Ni(2+) contacts are provided by H254 and H280. H328 serves as the catalytic Proton donor. D368 contributes to the Ni(2+) binding site.

This sequence belongs to the metallo-dependent hydrolases superfamily. Urease alpha subunit family. Heterotrimer of UreA (gamma), UreB (beta) and UreC (alpha) subunits. Three heterotrimers associate to form the active enzyme. The cofactor is Ni cation. Carboxylation allows a single lysine to coordinate two nickel ions.

The protein localises to the cytoplasm. It carries out the reaction urea + 2 H2O + H(+) = hydrogencarbonate + 2 NH4(+). It participates in nitrogen metabolism; urea degradation; CO(2) and NH(3) from urea (urease route): step 1/1. In Leptothrix cholodnii (strain ATCC 51168 / LMG 8142 / SP-6) (Leptothrix discophora (strain SP-6)), this protein is Urease subunit alpha.